A 151-amino-acid chain; its full sequence is Nucleoside diphosphate kinase (151 aa).

6 residues coordinate ATP: lysine 11, phenylalanine 59, arginine 87, threonine 93, arginine 104, and asparagine 114. The active-site Pros-phosphohistidine intermediate is histidine 117.

Belongs to the NDK family. Mg(2+) serves as cofactor.

The catalysed reaction is a 2'-deoxyribonucleoside 5'-diphosphate + ATP = a 2'-deoxyribonucleoside 5'-triphosphate + ADP. It catalyses the reaction a ribonucleoside 5'-diphosphate + ATP = a ribonucleoside 5'-triphosphate + ADP. In terms of biological role, major role in the synthesis of nucleoside triphosphates other than ATP. The ATP gamma phosphate is transferred to the NDP beta phosphate via a ping-pong mechanism, using a phosphorylated active-site intermediate. The protein is Nucleoside diphosphate kinase (NDK1) of Eremothecium gossypii (strain ATCC 10895 / CBS 109.51 / FGSC 9923 / NRRL Y-1056) (Yeast).